The sequence spans 313 residues: Proline iminopeptidase (313 aa).

Positions 35-298 (KPVVMLHGGP…SPASGHSAFE (264 aa)) constitute an AB hydrolase-1 domain. The active-site Nucleophile is Ser-110. Asp-266 is an active-site residue. The Proton donor role is filled by His-294.

Belongs to the peptidase S33 family. Homooligomer.

The protein localises to the cytoplasm. It catalyses the reaction Release of N-terminal proline from a peptide.. May be involved in proline metabolism and sensitivity to ascamycin. Has ascamycin dealanylating activity. The protein is Proline iminopeptidase (pip) of Xanthomonas citri (Xanthomonas campestris pv. citri).